Reading from the N-terminus, the 957-residue chain is MTQTLSQLENSGAFIERHIGPDAAQQQEMLNAVGAQSLNALTGQIVPKDIQLATPPQVGAPATEYAALAELKAIASRNKRFTSYIGIGYTAVQLPPVILRNMLENPGWYTAYTPYQPEVSQGRLEALLNFQQVTLDLTGLDMASASLLDEATAAAEAMAMAKRVSKLKNANRFFVASDVHPQTLDVVRTRAETFGFEVIVDDAQKVLDHQDVFGVLLQQVGTTGEIHDYTALISELKSRKIVVSVAADIMALVLLTAPGKQGADIVFGSAQRFGVPMGYGGPHAAFFAAKDEYKRSMPGRIIGVSKDAAGNTALRMAMQTREQHIRREKANSNICTSQVLLANIASLYAVYHGPVGLKRIANRIHRLTDILAAGLQQKGQKLRHAHYFDTLCVEVADKAGVLARAEAAEINLRSDILNAVGITLDETTTRENVMQLFSVLLGDNHGLDIDTLDKDVAHDSRSIQPAMLRDDEILTHPVFNRYHSETEMMRYMHSLERKDLALNQAMIPLGSCTMKLNAAAEMIPITWPEFAELHPFCPPEQAEGYQQMIAQLADWLVKLTGYDAVCMQPNSGAQGEYAGLLAIRHYHESRNEGHRDICLIPASAHGTNPASAHMAGMQVVVVACDKNGNIDLTDLRAKAEQAGDNLSCIMVTYPSTHGVYEETIREVCEIVHQFGGQVYLDGANMNAQVGITSPGFIGADVSHLNLHKTFCIPHGGGGPGMGPIGVKAHLAPFVPGHSVVQIEGMLTRQGAVSAAPFGSASILPISWMYIRMMGAEGLKKASQVAILNANYIASRLQDAFPVLYTGRDGRVAHECILDIRPLKEETGISELDIAKRLIDYGFHAPTMSFPVAGTLMVEPTESESKVELDRFIDAMLAIRAEIDQVKAGVWPLEDNPLVNAPHIQNELVAEWAHPYSREVAVFPAGVADKYWPTVKRLDDVYGDRNLFCSCVPISEYQ.

Lysine 708 bears the N6-(pyridoxal phosphate)lysine mark.

This sequence belongs to the GcvP family. As to quaternary structure, the glycine cleavage system is composed of four proteins: P, T, L and H. Pyridoxal 5'-phosphate serves as cofactor.

It carries out the reaction N(6)-[(R)-lipoyl]-L-lysyl-[glycine-cleavage complex H protein] + glycine + H(+) = N(6)-[(R)-S(8)-aminomethyldihydrolipoyl]-L-lysyl-[glycine-cleavage complex H protein] + CO2. Its function is as follows. The glycine cleavage system catalyzes the degradation of glycine. The P protein binds the alpha-amino group of glycine through its pyridoxal phosphate cofactor; CO(2) is released and the remaining methylamine moiety is then transferred to the lipoamide cofactor of the H protein. This is Glycine dehydrogenase (decarboxylating) from Escherichia fergusonii (strain ATCC 35469 / DSM 13698 / CCUG 18766 / IAM 14443 / JCM 21226 / LMG 7866 / NBRC 102419 / NCTC 12128 / CDC 0568-73).